The sequence spans 143 residues: Large ribosomal subunit protein uL13c (143 aa).

This sequence belongs to the universal ribosomal protein uL13 family. In terms of assembly, part of the 50S ribosomal subunit.

It is found in the plastid. Its subcellular location is the chloroplast. The protein is Large ribosomal subunit protein uL13c of Guillardia theta (Cryptophyte).